A 432-amino-acid polypeptide reads, in one-letter code: Adenylosuccinate synthetase (432 aa).

Residues 11-17 (GDEGKGK) and 39-41 (GHT) each bind GTP. D12 (proton acceptor) is an active-site residue. Mg(2+) contacts are provided by D12 and G39. Residues 12-15 (DEGK), 37-40 (NAGH), T134, R148, N230, T245, and R309 each bind IMP. The active-site Proton donor is H40. 305 to 311 (VTTGRKR) is a binding site for substrate. GTP-binding positions include R311, 337 to 339 (KLD), and 419 to 421 (GTG).

The protein belongs to the adenylosuccinate synthetase family. In terms of assembly, homodimer. It depends on Mg(2+) as a cofactor.

Its subcellular location is the cytoplasm. It catalyses the reaction IMP + L-aspartate + GTP = N(6)-(1,2-dicarboxyethyl)-AMP + GDP + phosphate + 2 H(+). The protein operates within purine metabolism; AMP biosynthesis via de novo pathway; AMP from IMP: step 1/2. Its function is as follows. Plays an important role in the de novo pathway and in the salvage pathway of purine nucleotide biosynthesis. Catalyzes the first committed step in the biosynthesis of AMP from IMP. The chain is Adenylosuccinate synthetase from Vanderwaltozyma polyspora (strain ATCC 22028 / DSM 70294 / BCRC 21397 / CBS 2163 / NBRC 10782 / NRRL Y-8283 / UCD 57-17) (Kluyveromyces polysporus).